Here is a 714-residue protein sequence, read N- to C-terminus: Fatty acid oxidation complex subunit alpha (714 aa).

Residues Met1–Pro190 form an enoyl-CoA hydratase region. The interval Ala306–Gln714 is 3-hydroxyacyl-CoA dehydrogenase.

This sequence in the N-terminal section; belongs to the enoyl-CoA hydratase/isomerase family. In the central section; belongs to the 3-hydroxyacyl-CoA dehydrogenase family. In terms of assembly, heterotetramer of two alpha chains (FadJ) and two beta chains (FadI).

The protein resides in the cytoplasm. The enzyme catalyses a (3S)-3-hydroxyacyl-CoA = a (2E)-enoyl-CoA + H2O. It catalyses the reaction a 4-saturated-(3S)-3-hydroxyacyl-CoA = a (3E)-enoyl-CoA + H2O. It carries out the reaction a (3S)-3-hydroxyacyl-CoA + NAD(+) = a 3-oxoacyl-CoA + NADH + H(+). The catalysed reaction is (3S)-3-hydroxybutanoyl-CoA = (3R)-3-hydroxybutanoyl-CoA. Its pathway is lipid metabolism; fatty acid beta-oxidation. Catalyzes the formation of a hydroxyacyl-CoA by addition of water on enoyl-CoA. Also exhibits 3-hydroxyacyl-CoA epimerase and 3-hydroxyacyl-CoA dehydrogenase activities. The protein is Fatty acid oxidation complex subunit alpha of Shigella flexneri.